We begin with the raw amino-acid sequence, 235 residues long: Large ribosomal subunit protein uL1 (235 aa).

The protein belongs to the universal ribosomal protein uL1 family. Part of the 50S ribosomal subunit.

Its function is as follows. Binds directly to 23S rRNA. The L1 stalk is quite mobile in the ribosome, and is involved in E site tRNA release. Functionally, protein L1 is also a translational repressor protein, it controls the translation of the L11 operon by binding to its mRNA. This chain is Large ribosomal subunit protein uL1, found in Synechococcus sp. (strain CC9605).